The following is a 385-amino-acid chain: Protein hunchback (385 aa).

2 disordered regions span residues 1-94 and 124-216; these read IGGI…YDAM and ESRA…PGLR. Residues 63–77 show a composition bias toward low complexity; it reads SASPSSSSKDSNGHS. 2 stretches are compositionally biased toward basic and acidic residues: residues 126 to 135 and 173 to 203; these read RASDARDHSP and PERR…REGS. 4 C2H2-type zinc fingers span residues 229–251, 258–280, 286–308, and 314–338; these read FKCK…SKEH, LCCR…MRNH, FQCS…LKSH, and YRCA…KYQH. Residues 361–385 form a disordered region; it reads TRRGPKQKPLSKIFEQQTGTNNHSP. Residues 374–385 show a composition bias toward polar residues; sequence FEQQTGTNNHSP.

Belongs to the hunchback C2H2-type zinc-finger protein family.

The protein localises to the nucleus. Functionally, gap class segmentation protein that controls development of head structures. The protein is Protein hunchback (hb) of Bombyx mori (Silk moth).